The sequence spans 201 residues: UPF0323 lipoprotein Cj0371 (201 aa).

Residues Met-1–Gly-26 form the signal peptide. A lipid anchor (N-palmitoyl cysteine) is attached at Cys-27. The S-diacylglycerol cysteine moiety is linked to residue Cys-27. The disordered stretch occupies residues Asn-169–Ser-201. 2 stretches are compositionally biased toward low complexity: residues Lys-170–Gly-184 and Lys-191–Ser-201.

Belongs to the UPF0323 family.

It localises to the cell membrane. The chain is UPF0323 lipoprotein Cj0371 from Campylobacter jejuni subsp. jejuni serotype O:2 (strain ATCC 700819 / NCTC 11168).